The primary structure comprises 1601 residues: PH and SEC7 domain-containing protein (1601 aa).

Residues 1–340 are mediates regulation of axon branching and microtubule organization; it reads MSEELKVVLR…TGDLILNLSR (340 aa). The region spanning 6–88 is the PDZ domain; the sequence is KVVLRRSEQH…LVTLELKRDP (83 aa). Disordered regions lie at residues 113 to 192, 211 to 322, 339 to 440, 459 to 657, 737 to 780, 872 to 965, and 1040 to 1126; these read NIYD…SSTK, TSPT…PAKA, SRTP…SLTN, LEED…SSSG, NSSL…SETA, QQQQ…LLSC, and QQLK…SDVE. The span at 118-128 shows a compositional bias: polar residues; the sequence is HSSSTNSSPNH. Over residues 166–191 the composition is skewed to low complexity; sequence ASGSTTTTTTATHTHSHSRNSSASST. Positions 283-297 are enriched in polar residues; that stretch reads QSLQHSNSYSGSPVT. Positions 300-311 are enriched in basic and acidic residues; the sequence is RFADREPEREPE. The short motif at 323-340 is the Microtubule elimination domain (MTED); Binds tubulin and blocks microtubule polymerization element; it reads PRFEAYMMTGDLILNLSR. Polar residues predominate over residues 339-348; that stretch reads SRTPQTSNPL. The segment covering 353–362 has biased composition (basic and acidic residues); it reads KKIDSLRDSP. 3 stretches are compositionally biased toward low complexity: residues 382 to 399, 409 to 424, and 468 to 487; these read SSPT…TSSD, QKQQ…QQQQ, and QRQQ…YEYY. Residues 488 to 505 are compositionally biased toward acidic residues; that stretch reads QNEDELEEQEEVEEEREE. A compositionally biased stretch (polar residues) spans 510 to 519; that stretch reads YDITNIETYQ. The segment covering 526–557 has biased composition (acidic residues); sequence DDDDSDRQCLVDDDDDDDAYDDEENDAGDEDY. Polar residues-rich tracts occupy residues 558–567 and 617–630; these read STNSLGSGSA and TSFS…SLST. Low complexity predominate over residues 640–657; it reads SVPTSPEPSSLVPESSSG. A compositionally biased stretch (polar residues) spans 737–747; it reads NSSLASNNNEG. 4 stretches are compositionally biased toward low complexity: residues 752–780, 872–942, 949–965, and 1040–1052; these read NRSS…SETA, QQQQ…QQQQ, GGQV…LLSC, and QQLK…QQQQ. Positions 894–1601 are mediates association to the membrane and rescricts the microtubule-inhibiting activity to the cell cortex; it reads SSSPQHSAVG…PTNRKEKKKK (708 aa). The segment covering 1053–1071 has biased composition (basic and acidic residues); it reads QRERERDRDRDREQSEHKV. An SEC7 domain is found at 1125 to 1291; sequence VESLHSYHYS…KSLYQAIKTK (167 aa). One can recognise a PH domain in the interval 1332–1445; that stretch reads VEYKKGYVMR…WVETINYVCA (114 aa). Residues 1544–1601 are disordered; it reads LELQAQQPSPASHEEEADTFPVGTTACTPPTPQSINQKDQQKEQQQQQPTNRKEKKKK. Polar residues predominate over residues 1568–1579; it reads TACTPPTPQSIN.

Belongs to the PSD family. As to quaternary structure, interacts (via MTED motif) with tubulin. In terms of tissue distribution, expressed in the head (at protein level).

It localises to the cell projection. It is found in the axon. The protein resides in the cytoplasm. Its subcellular location is the cell membrane. The protein localises to the cell cortex. In terms of biological role, guanine nucleotide exchange factor for Arf6. Regulates axon growth and branching by inhibiting microtubule polymerisation at the cortex. Together with shot, promotes axonal microtubule bundle integrity. Required for normal ethanol-induced tolerance and preference. Probably by activating Arf6, counteracts ethanol-induced sedation. The protein is PH and SEC7 domain-containing protein of Drosophila melanogaster (Fruit fly).